A 429-amino-acid polypeptide reads, in one-letter code: Putative F-box/kelch-repeat protein At2g21680 (429 aa).

The interval 1–32 is disordered; that stretch reads MVLISETSDDGSTGGDHQIKKPKKEEDRNKKL. The segment covering 17–29 has biased composition (basic and acidic residues); the sequence is HQIKKPKKEEDRN. Residues 37–84 form the F-box domain; the sequence is QVSLPIPEELILRCFLLVRRCHHPSLSLVCRSFHSLMSKLYDDRLRLG. 5 Kelch repeats span residues 144–175, 176–221, 222–267, 269–313, and 315–359; these read DIYV…RRGE, TSIR…VIDG, KIYV…LTYA, MKEK…VVDN, and LFCI…DGYK.

The sequence is that of Putative F-box/kelch-repeat protein At2g21680 from Arabidopsis thaliana (Mouse-ear cress).